The chain runs to 189 residues: Peptidyl-tRNA hydrolase (189 aa).

Residue tyrosine 15 participates in tRNA binding. Histidine 20 (proton acceptor) is an active-site residue. TRNA contacts are provided by phenylalanine 66, asparagine 68, and asparagine 114.

This sequence belongs to the PTH family. In terms of assembly, monomer.

The protein resides in the cytoplasm. It carries out the reaction an N-acyl-L-alpha-aminoacyl-tRNA + H2O = an N-acyl-L-amino acid + a tRNA + H(+). Hydrolyzes ribosome-free peptidyl-tRNAs (with 1 or more amino acids incorporated), which drop off the ribosome during protein synthesis, or as a result of ribosome stalling. In terms of biological role, catalyzes the release of premature peptidyl moieties from peptidyl-tRNA molecules trapped in stalled 50S ribosomal subunits, and thus maintains levels of free tRNAs and 50S ribosomes. The polypeptide is Peptidyl-tRNA hydrolase (Streptococcus mutans serotype c (strain ATCC 700610 / UA159)).